The following is a 72-amino-acid chain: Large ribosomal subunit protein uL29 (72 aa).

It belongs to the universal ribosomal protein uL29 family.

The protein is Large ribosomal subunit protein uL29 of Chlamydia caviae (strain ATCC VR-813 / DSM 19441 / 03DC25 / GPIC) (Chlamydophila caviae).